A 218-amino-acid polypeptide reads, in one-letter code: LexA repressor (218 aa).

Residues 28-48 (RAEIAAEFGFSSPNAAEEHLR) constitute a DNA-binding region (H-T-H motif). Residues S136 and K173 each act as for autocatalytic cleavage activity in the active site.

Belongs to the peptidase S24 family. As to quaternary structure, homodimer.

The enzyme catalyses Hydrolysis of Ala-|-Gly bond in repressor LexA.. In terms of biological role, represses a number of genes involved in the response to DNA damage (SOS response), including recA and lexA. In the presence of single-stranded DNA, RecA interacts with LexA causing an autocatalytic cleavage which disrupts the DNA-binding part of LexA, leading to derepression of the SOS regulon and eventually DNA repair. This chain is LexA repressor, found in Cupriavidus pinatubonensis (strain JMP 134 / LMG 1197) (Cupriavidus necator (strain JMP 134)).